Here is an 837-residue protein sequence, read N- to C-terminus: Toll-like receptor 4 (837 aa).

The N-terminal stretch at 1–23 is a signal peptide; that stretch reads MMSASRLAGTLIPAMAFLSCVRP. Topologically, residues 24-629 are extracellular; the sequence is ESWEPCVVPN…SLNITCQMNK (606 aa). A disulfide bridge links Cys-29 with Cys-38. Asn-33 carries an N-linked (GlcNAc...) asparagine glycan. 5 LRR repeats span residues 53–74, 77–98, 101–122, 125–146, and 149–170; these read STKN…SFFS, ELQV…AYQS, HLST…AFSG, SLQK…PIGH, and TLKE…EYFS. Asn-171 carries an N-linked (GlcNAc...) asparagine glycan. LRR repeat units lie at residues 174 to 197, 203 to 223, and 225 to 245; these read NLEY…RVLH, NLSL…AFKE, and RLHK…KTCI. Asn-203 carries an N-linked (GlcNAc...) asparagine glycan. Cys-279 and Cys-304 are oxidised to a cystine. Residues Asn-280 and Asn-307 are each glycosylated (N-linked (GlcNAc...) asparagine). LRR repeat units follow at residues 329 to 349, 350 to 371, 372 to 392, 398 to 420, 421 to 442, 446 to 454, 470 to 493, 495 to 516, 519 to 540, and 543 to 563; these read GWQH…LKLK, SLKR…VDLP, SLEF…CSQS, SLKY…LGLE, QLEH…SVFL, NLIYLDISH, SLEV…FTEL, NLTF…AFNS, SLQV…PYKC, and SLRV…QELQ. A disulfide bridge connects residues Cys-388 and Cys-389. N-linked (GlcNAc...) asparagine glycosylation is found at Asn-495 and Asn-524. N-linked (GlcNAc...) asparagine glycosylation occurs at Asn-573. The 51-residue stretch at 577–627 folds into the LRRCT domain; that stretch reads NDFACTCEHQSFLQWIKDQRQLLVEVERMECATPSDKQGMPVLSLNITCQM. 2 disulfide bridges follow: Cys-581/Cys-607 and Cys-583/Cys-625. N-linked (GlcNAc...) asparagine glycosylation is found at Asn-622 and Asn-628. The chain crosses the membrane as a helical span at residues 630 to 650; that stretch reads TIIGVSVLSVLVVSVVAVLVY. Topologically, residues 651–837 are cytoplasmic; sequence KFYFHLMLLA…GCNWQEATSI (187 aa). Positions 670 to 813 constitute a TIR domain; it reads NVYDAFVIYS…IFWRRLRKAL (144 aa).

This sequence belongs to the Toll-like receptor family. Belongs to the lipopolysaccharide (LPS) receptor, a multi-protein complex containing at least CD14, LY96 and TLR4. Binding to bacterial LPS leads to homodimerization. Interacts with LY96 via the extracellular domain. Interacts with MYD88 and TIRAP via their respective TIR domains. Interacts with TICAM2. Interacts with NOX4. Interacts with CNPY3 and HSP90B1; this interaction is required for proper folding in the endoplasmic reticulum. Interacts with MAP3K21; this interaction leads to negative regulation of TLR4 signaling. Interacts with CD36, following CD36 stimulation by oxLDL or amyloid-beta 42, and forms a heterodimer with TLR6. The trimeric complex is internalized and triggers inflammatory response. LYN kinase activity facilitates TLR4-TLR6 heterodimerization and signal initiation. Interacts with TICAM1 in response to LPS in a WDFY1-dependent manner. Interacts with WDFY1 in response to LPS. Interacts with SMPDL3B. Interacts with CEACAM1; upon lipopolysaccharide stimulation, forms a complex including TLR4 and the phosphorylated form of SYK and CEACAM1, which in turn, recruits PTPN6 that dephosphorylates SYK, reducing the production of reactive oxygen species (ROS) and lysosome disruption, which in turn, reduces the activity of the inflammasome. Interacts with RFTN1; the interaction occurs in response to lipopolysaccharide stimulation. Interacts with SCIMP; the interaction occurs in response to lipopolysaccharide stimulation and is enhanced by phosphorylation of SCIMP by LYN. This interaction facilitates the phosphorylation of TLR4 by LYN which elicits a selective cytokine response in macrophages. Interacts with TRAF3IP3. Interacts with TREM1; this interaction enhances TLR4-mediated inflammatory response. Interacts with ZG16B/PAUF. Interacts with CD82; this interaction inhibits TLR4-mediated signaling pathway. Phosphorylated on tyrosine residues by LYN after binding lipopolysaccharide. Post-translationally, ubiquitinated by RNF128 via 'Lys-28'-linked polyubiquitin chains, leading to proteasomal degradation.

The protein localises to the cell membrane. Its subcellular location is the early endosome. It localises to the cell projection. It is found in the ruffle. Functionally, transmembrane receptor that functions as a pattern recognition receptor recognizing pathogen- and damage-associated molecular patterns (PAMPs and DAMPs) to induce innate immune responses via downstream signaling pathways. At the plasma membrane, cooperates with LY96 to mediate the innate immune response to bacterial lipopolysaccharide (LPS). Also involved in LPS-independent inflammatory responses triggered by free fatty acids, such as palmitate, and Ni(2+). Mechanistically, acts via MYD88, TIRAP and TRAF6, leading to NF-kappa-B activation, cytokine secretion and the inflammatory response. Alternatively, CD14-mediated TLR4 internalization via endocytosis is associated with the initiation of a MYD88-independent signaling via the TICAM1-TBK1-IRF3 axis leading to type I interferon production. In addition to the secretion of proinflammatory cytokines, initiates the activation of NLRP3 inflammasome and formation of a positive feedback loop between autophagy and NF-kappa-B signaling cascade. In complex with TLR6, promotes inflammation in monocytes/macrophages by associating with TLR6 and the receptor CD86. Upon ligand binding, such as oxLDL or amyloid-beta 42, the TLR4:TLR6 complex is internalized and triggers inflammatory response, leading to NF-kappa-B-dependent production of CXCL1, CXCL2 and CCL9 cytokines, via MYD88 signaling pathway, and CCL5 cytokine, via TICAM1 signaling pathway. In myeloid dendritic cells, vesicular stomatitis virus glycoprotein G but not LPS promotes the activation of IRF7, leading to type I IFN production in a CD14-dependent manner. The sequence is that of Toll-like receptor 4 (TLR4) from Gorilla gorilla gorilla (Western lowland gorilla).